Consider the following 187-residue polypeptide: Large ribosomal subunit protein eL18x (187 aa).

Residues 150 to 187 form a disordered region; it reads HFGPAPGVPHSNTKPYVRHKGRKFEKARGKRKSRGFKV. The span at 165 to 187 shows a compositional bias: basic residues; that stretch reads YVRHKGRKFEKARGKRKSRGFKV.

Belongs to the eukaryotic ribosomal protein eL18 family.

The protein is Large ribosomal subunit protein eL18x (RPL18C) of Arabidopsis thaliana (Mouse-ear cress).